The sequence spans 1567 residues: ABC multidrug transporter MDR1 (1567 aa).

The span at 1–11 (MASQPPQPPSG) shows a compositional bias: pro residues. Residues 1-37 (MASQPPQPPSGQPDTQYEEYQSEVITETTNRPTPAAD) form a disordered region. A compositionally biased stretch (polar residues) spans 22–32 (SEVITETTNRP). N-linked (GlcNAc...) asparagine glycans are attached at residues Asn-149, Asn-157, and Asn-356. An ABC transporter 1 domain is found at 167-432 (VQYQDTFLSP…FEEMGWYCPP (266 aa)). Helical transmembrane passes span 543-563 (STIA…SLFF), 571-591 (GFFA…LMSI), 636-656 (IPIK…LGGL), 661-681 (AKFF…SAIF), 691-711 (IPQA…YTGF), and 798-818 (LGIL…VSEL). Asn-819, Asn-895, and Asn-912 each carry an N-linked (GlcNAc...) asparagine glycan. The ABC transporter 2 domain maps to 891 to 1134 (FTWRNVTYDI…LLNYFETHGA (244 aa)). Residue 927-934 (GVSGAGKT) coordinates ATP. Positions 1172-1202 (ESRHVQQELDRIQSETSKRNEGHGQSAEKEP) are disordered. The helical transmembrane segment at 1231–1251 (IWGKLLLGLTSALFIGFSFFL) threads the bilayer. Asn-1253 carries N-linked (GlcNAc...) asparagine glycosylation. The next 5 membrane-spanning stretches (helical) occupy residues 1257–1277 (AGLQ…SSLV), 1305–1325 (VFLL…GIIA), 1345–1365 (ILLL…QMII), 1372–1392 (ETAG…NGVL), and 1498–1518 (GIGW…YYLI).

This sequence belongs to the ABC transporter superfamily. ABCG family. PDR (TC 3.A.1.205) subfamily.

It is found in the cell membrane. It carries out the reaction voriconazole(in) + ATP + H2O = voriconazole(out) + ADP + phosphate + H(+). The catalysed reaction is fluconazole(in) + ATP + H2O = fluconazole(out) + ADP + phosphate + H(+). The enzyme catalyses (R)-miconazole(in) + ATP + H2O = (R)-miconazole(out) + ADP + phosphate + H(+). It catalyses the reaction (S)-miconazole(in) + ATP + H2O = (S)-miconazole(out) + ADP + phosphate + H(+). Its function is as follows. Pleiotropic ABC efflux transporter that may be involved in the modulation susceptibility to a wide range of unrelated cytotoxic compounds. The sequence is that of ABC multidrug transporter MDR1 from Trichophyton tonsurans (strain CBS 112818) (Scalp ringworm fungus).